Consider the following 379-residue polypeptide: UDP-4-amino-4-deoxy-L-arabinose--oxoglutarate aminotransferase (379 aa).

Residue lysine 182 is modified to N6-(pyridoxal phosphate)lysine.

The protein belongs to the DegT/DnrJ/EryC1 family. ArnB subfamily. In terms of assembly, homodimer. It depends on pyridoxal 5'-phosphate as a cofactor.

It catalyses the reaction UDP-4-amino-4-deoxy-beta-L-arabinose + 2-oxoglutarate = UDP-beta-L-threo-pentopyranos-4-ulose + L-glutamate. Its pathway is nucleotide-sugar biosynthesis; UDP-4-deoxy-4-formamido-beta-L-arabinose biosynthesis; UDP-4-deoxy-4-formamido-beta-L-arabinose from UDP-alpha-D-glucuronate: step 2/3. It participates in bacterial outer membrane biogenesis; lipopolysaccharide biosynthesis. Its function is as follows. Catalyzes the conversion of UDP-4-keto-arabinose (UDP-Ara4O) to UDP-4-amino-4-deoxy-L-arabinose (UDP-L-Ara4N). The modified arabinose is attached to lipid A and is required for resistance to polymyxin and cationic antimicrobial peptides. This is UDP-4-amino-4-deoxy-L-arabinose--oxoglutarate aminotransferase from Escherichia coli (strain K12 / DH10B).